Here is a 316-residue protein sequence, read N- to C-terminus: dTDP-4-dehydro-6-deoxyglucose reductase (316 aa).

Residue Phe-16–Ile-17 participates in NAD(+) binding. The active-site Proton acceptor is Tyr-151. Residue Lys-155 participates in NAD(+) binding.

This sequence belongs to the NAD(P)-dependent epimerase/dehydratase family.

The enzyme catalyses dTDP-alpha-D-fucose + NAD(+) = dTDP-4-dehydro-6-deoxy-alpha-D-glucose + NADH + H(+). The catalysed reaction is dTDP-alpha-D-fucose + NADP(+) = dTDP-4-dehydro-6-deoxy-alpha-D-glucose + NADPH + H(+). Its pathway is bacterial outer membrane biogenesis; LPS O-antigen biosynthesis. With respect to regulation, inhibited by Cu(2+), while other divalent cations such as Ca(2+), Co(2+), Fe(2+), Mn(2+) and Mg(2+) have no obvious effects on enzyme activity. Its function is as follows. Catalyzes the stereospecific reduction of the C-4 keto group of dTDP-4-dehydro-6-deoxy-D-glucose, leading to dTDP-D-fucopyranose. This is a step in the biosynthesis of D-fucofuranose, a component of E.coli O52 O antigen. Is more efficient using NADH than NADPH as cosubstrate. The protein is dTDP-4-dehydro-6-deoxyglucose reductase (fcf1) of Escherichia coli.